The primary structure comprises 216 residues: UDP-N-acetylglucosamine transferase subunit ALG14 (216 aa).

At M1 to C3 the chain is on the lumenal side. A helical membrane pass occupies residues V4–V24. Over V25–V216 the chain is Cytoplasmic.

This sequence belongs to the ALG14 family. As to quaternary structure, forms with ALG13 the active heterodimeric UDP-N-acetylglucosamine transferase complex.

It localises to the endoplasmic reticulum membrane. Part of the UDP-N-acetylglucosamine transferase complex that operates in the biosynthetic pathway of dolichol-linked oligosaccharides, the glycan precursors employed in protein asparagine (N)-glycosylation. The assembly of dolichol-linked oligosaccharides begins on the cytosolic side of the endoplasmic reticulum membrane and finishes in its lumen. The sequential addition of sugars to dolichol pyrophosphate produces dolichol-linked oligosaccharides containing fourteen sugars, including two GlcNAcs, nine mannoses and three glucoses. Once assembled, the oligosaccharides are transferred from the lipid to nascent proteins by oligosaccharyltransferases. Functions as a protein-membrane adapter recruiting ALG13 at the cytoplasmic face of the endoplasmic reticulum, where the complex catalyzes the second step of dolichol pyrophosphate biosynthesis, transferring a beta1,4-linked N-acetylglucosamine (GlcNAc) from UDP-GlcNAc to GlcNAc-pyrophosphatedolichol (Gn-PDol) to produce N,N'-diacetylchitobiosyl diphosphodolichol. N,N'-diacetylchitobiosyl diphosphodolichol is a substrate for ALG1, the following enzyme in the biosynthetic pathway. This is UDP-N-acetylglucosamine transferase subunit ALG14 from Homo sapiens (Human).